The following is a 379-amino-acid chain: Cytochrome b (379 aa).

4 helical membrane-spanning segments follow: residues 34-54 (YGSL…FLSM), 78-99 (WLLR…YLHA), 114-134 (WNIG…GYVL), and 179-199 (FFAF…LHIM). 2 residues coordinate heme b: His-84 and His-98. Residues His-183 and His-197 each coordinate heme b. An a ubiquinone-binding site is contributed by His-202. The next 4 membrane-spanning stretches (helical) occupy residues 227–247 (IKDT…VLFE), 289–309 (LGGV…PLTS), 321–341 (LNKT…WIGG), and 349–369 (IIIG…SPTI).

It belongs to the cytochrome b family. As to quaternary structure, the main subunits of complex b-c1 are: cytochrome b, cytochrome c1 and the Rieske protein. It depends on heme b as a cofactor.

It is found in the mitochondrion inner membrane. Component of the ubiquinol-cytochrome c reductase complex (complex III or cytochrome b-c1 complex) that is part of the mitochondrial respiratory chain. The b-c1 complex mediates electron transfer from ubiquinol to cytochrome c. Contributes to the generation of a proton gradient across the mitochondrial membrane that is then used for ATP synthesis. In Lumbricus terrestris (Common earthworm), this protein is Cytochrome b (MT-CYB).